Consider the following 828-residue polypeptide: Periplasmic nitrate reductase (828 aa).

Positions 1 to 31 (MKLSRRSFMKANAVAAAAAAAGLSVPGVARA) form a signal peptide, tat-type signal. The region spanning 39–95 (IKWDKAPCRFCGTGCGVLVGTQQGRVVACQGDPDAPVNRGLNCIKGYFLPKIMYGKD) is the 4Fe-4S Mo/W bis-MGD-type domain. 4 residues coordinate [4Fe-4S] cluster: C46, C49, C53, and C81. Residues K83, Q150, N175, C179, 212-219 (WGSNMAEM), 243-247 (STYQH), 262-264 (QSD), M372, Q376, N482, 508-509 (SD), K531, D558, and 718-727 (TGRVLEHWHT) each bind Mo-bis(molybdopterin guanine dinucleotide). F794 contributes to the substrate binding site. Mo-bis(molybdopterin guanine dinucleotide) is bound by residues N802 and K819.

The protein belongs to the prokaryotic molybdopterin-containing oxidoreductase family. NasA/NapA/NarB subfamily. Component of the periplasmic nitrate reductase NapAB complex composed of NapA and NapB. The cofactor is [4Fe-4S] cluster. Mo-bis(molybdopterin guanine dinucleotide) is required as a cofactor. Post-translationally, predicted to be exported by the Tat system. The position of the signal peptide cleavage has not been experimentally proven.

It localises to the periplasm. The enzyme catalyses 2 Fe(II)-[cytochrome] + nitrate + 2 H(+) = 2 Fe(III)-[cytochrome] + nitrite + H2O. In terms of biological role, catalytic subunit of the periplasmic nitrate reductase complex NapAB. Receives electrons from NapB and catalyzes the reduction of nitrate to nitrite. In Escherichia coli O81 (strain ED1a), this protein is Periplasmic nitrate reductase.